The primary structure comprises 1427 residues: Multidrug resistance-associated protein 5 (1427 aa).

The Cytoplasmic segment spans residues 1–147 (MPSDSEEVCL…IYRFISTRLW (147 aa)). The helical transmembrane segment at 148–168 (FSCAVFFFCLIFGFIGPTCFI) threads the bilayer. The ABC transmembrane type-1 1 domain occupies 151 to 432 (AVFFFCLIFG…IPYGSRYLAE (282 aa)). Residues 169-185 (RRLIAFAENPERDEQSR) are Extracellular-facing. A helical membrane pass occupies residues 186–206 (IVYSYGIALVAAISVVEFARV). Over 207–268 (LSYGATWAVS…RLFDAVTFAP (62 aa)) the chain is Cytoplasmic. Residues 269-289 (LVLVGPLVLVGGIGYLLMVIG) form a helical membrane-spanning segment. Arg290 is a topological domain (extracellular). Residues 291-311 (WSLLGILVFFVFDVIQFGLGK) form a helical membrane-spanning segment. Residues 312 to 375 (SMVACRNLAI…RKSGYAQSLA (64 aa)) lie on the Cytoplasmic side of the membrane. Residues 376 to 396 (IACGPVVPVVAAILTFVGVVL) form a helical membrane-spanning segment. Topologically, residues 397-399 (AGN) are extracellular. Residues 400–420 (DLLASDAFSAITVYFVMLFGI) traverse the membrane as a helical segment. At 421–770 (RMIPYGSRYL…TIAWRIYKQY (350 aa)) the chain is on the cytoplasmic side. In terms of domain architecture, ABC transporter 1 spans 486-707 (PTENEVIVVE…NDAYKTFVDA (222 aa)). 518–525 (GAVGCGKS) lines the ATP pocket. Residues 771–791 (IHAAGGWPIWTCLVIGFIVNV) form a helical membrane-spanning segment. The ABC transmembrane type-1 2 domain maps to 783–1078 (LVIGFIVNVV…AVRTQTELEA (296 aa)). Over 792–833 (VSNIFSTYWLSRWLKKGHDETTTITNGTEFLEMKTSLADSPV) the chain is Extracellular. Asn817 is a glycosylation site (N-linked (GlcNAc...) asparagine). The helical transmembrane segment at 834 to 854 (TGFYAAVYLVALVVLTISGLF) threads the bilayer. The Cytoplasmic segment spans residues 855 to 909 (KACVFVKVSLTAATRLHDRMFQAVIHGATSFFDSTPTGRILNRFSKDMDEIDVKL). The helical transmembrane segment at 910–930 (PFTAEVFLQNMITCLGFLVVI) threads the bilayer. Thr931 is a topological domain (extracellular). Residues 932 to 952 (SVFPYFLLFAIPLFVVFVVFV) form a helical membrane-spanning segment. The Cytoplasmic segment spans residues 953 to 1022 (SCFRAGIRNL…MFQSAMRWLA (70 aa)). The helical transmembrane segment at 1023–1043 (VWLDLLVVVMTAIVALLTVML) threads the bilayer. Topologically, residues 1044–1049 (TGTVSP) are extracellular. A helical transmembrane segment spans residues 1050–1070 (ADAGMAIAFAVQMSGIFQFAV). At 1071–1427 (RTQTELEAKM…SSDTDIEVVQ (357 aa)) the chain is on the cytoplasmic side. The region spanning 1117–1351 (INFSEVNLRY…DWSVYKLEDK (235 aa)) is the ABC transporter 2 domain. 1151 to 1158 (GRTGSGKS) contacts ATP. A disordered region spans residues 1361–1427 (VGENSEHSME…SSDTDIEVVQ (67 aa)). Residues 1382–1418 (DIVKVENEQKDSSDDVVHIESGDDDVKADSSEVKETS) show a composition bias toward basic and acidic residues.

It belongs to the ABC transporter superfamily. ABCC family. Conjugate transporter (TC 3.A.1.208) subfamily. Highly expressed in the intestine and pharynx. Expressed at low levels in the hypodermis and in some neurons.

The protein localises to the basolateral cell membrane. In terms of biological role, heme transporter required for the export of intestinal heme to different tissues and subcellular compartments. Also, required for the export of vitamin B12 from the intestine of the mother to the embryo to support embryonic development. The sequence is that of Multidrug resistance-associated protein 5 from Caenorhabditis elegans.